Reading from the N-terminus, the 327-residue chain is G-protein coupled receptor 55 (327 aa).

The Extracellular portion of the chain corresponds to 1–20; sequence MSQPERDNCSFDSVDKLTRT. Asparagine 8 carries an N-linked (GlcNAc...) asparagine glycan. A helical transmembrane segment spans residues 21–41; that stretch reads LQLAVHIPTFLLGLVLNLLAI. Over 42 to 57 the chain is Cytoplasmic; sequence RGFSAFLKKRKLDYIA. Residues 58–78 traverse the membrane as a helical segment; the sequence is TSIYMINLAVFDLLLVLSLPF. Residues 79-93 lie on the Extracellular side of the membrane; sequence KMVLPQVESPLPSFC. The chain crosses the membrane as a helical span at residues 94–114; sequence TLVECLYFISMYGSVFTICFI. The Cytoplasmic segment spans residues 115–136; the sequence is SLDRFLAIQYPILASHLRSPRK. The chain crosses the membrane as a helical span at residues 137–157; it reads TFGICCIIWMLVWIGSIPIYT. Residues 158-179 are Extracellular-facing; it reads FHREVERYKCFHNMSDVTWSAS. Asparagine 170 carries an N-linked (GlcNAc...) asparagine glycan. The helical transmembrane segment at 180 to 200 threads the bilayer; sequence VFFPLEIFGFLLPMGIMGFCS. The Cytoplasmic segment spans residues 201–239; it reads YRSIHILLRRPDSTEDWVQQRDTKGWVQKRACIWTIATN. Residues 240–260 form a helical membrane-spanning segment; it reads LVIFVVSFLPVHLGFFLQYLV. At 261–279 the chain is on the extracellular side; it reads RNRFILDCRMKQGISLFLQ. Residues 280-300 form a helical membrane-spanning segment; it reads LSLCFSNINCCLDVFCYYFVI. At 301-327 the chain is on the cytoplasmic side; sequence KEFRMRIKAHRPSTIKLVNQDTMVSRG.

It belongs to the G-protein coupled receptor 1 family. In terms of tissue distribution, highly expressed in splenic plasma cells.

Its subcellular location is the cell membrane. Functionally, G-protein coupled receptor that binds to several ligands including 2-arachidonoyl lysophosphatidylinositol or lysophosphatidylglucoside with high affinity, leading to rapid and transient activation of numerous intracellular signaling pathways. Induces the Ca(2+) release from intracellular stores via ERK, the heterotrimeric G protein GNA13 and RHOA leading to morphological changes including cell rounding and stress fiber formation. In macrophages, acts downstream of lysophosphatidylglucoside to inhibit the translocation of the phospholipid-transporting ABCA1 to plasma membrane and subsequent cholesterol efflux leading to lipid accumulation and foam cell formation. May be involved in hyperalgesia associated with inflammatory and neuropathic pain. This Mus musculus (Mouse) protein is G-protein coupled receptor 55 (Gpr55).